A 1410-amino-acid polypeptide reads, in one-letter code: DNA-directed RNA polymerase subunit beta' (1410 aa).

Zn(2+) contacts are provided by C70, C72, C85, and C88. Mg(2+)-binding residues include D460, D462, and D464. Zn(2+) contacts are provided by C814, C888, C895, and C898.

Belongs to the RNA polymerase beta' chain family. In terms of assembly, the RNAP catalytic core consists of 2 alpha, 1 beta, 1 beta' and 1 omega subunit. When a sigma factor is associated with the core the holoenzyme is formed, which can initiate transcription. Mg(2+) is required as a cofactor. It depends on Zn(2+) as a cofactor.

It carries out the reaction RNA(n) + a ribonucleoside 5'-triphosphate = RNA(n+1) + diphosphate. Functionally, DNA-dependent RNA polymerase catalyzes the transcription of DNA into RNA using the four ribonucleoside triphosphates as substrates. This chain is DNA-directed RNA polymerase subunit beta', found in Saccharophagus degradans (strain 2-40 / ATCC 43961 / DSM 17024).